Consider the following 481-residue polypeptide: E3 ubiquitin-protein ligase makorin-1 (481 aa).

C3H1-type zinc fingers lie at residues Trp55–Ser82, Ser84–Pro111, and Glu208–Ser235. The makorin-type Cys-His stretch occupies residues Cys236–His263. The segment at Cys281 to Arg335 adopts an RING-type zinc-finger fold. A C3H1-type 4 zinc finger spans residues Ala364–Pro393.

As to quaternary structure, interacts with p53/TP53 and CDKN1A. Interacts with TERT, modulating telomere length homeostasis. In terms of processing, auto-ubiquitinated; which leads to proteasomal degradation. As to expression, highly expressed in embryo, in specific cell types of the central nervous system, in brain with the strongest levels of expression in the mantle layers and in testis. Moderate to low levels in somatic tissues.

The catalysed reaction is S-ubiquitinyl-[E2 ubiquitin-conjugating enzyme]-L-cysteine + [acceptor protein]-L-lysine = [E2 ubiquitin-conjugating enzyme]-L-cysteine + N(6)-ubiquitinyl-[acceptor protein]-L-lysine.. It functions in the pathway protein modification; protein ubiquitination. In terms of biological role, E3 ubiquitin ligase catalyzing the covalent attachment of ubiquitin moieties onto substrate proteins. These substrates include FILIP1, p53/TP53, CDKN1A and TERT. Keeps cells alive by suppressing p53/TP53 under normal conditions, but stimulates apoptosis by repressing CDKN1A under stress conditions. Acts as a negative regulator of telomerase. Has negative and positive effects on RNA polymerase II-dependent transcription. The polypeptide is E3 ubiquitin-protein ligase makorin-1 (Mkrn1) (Mus musculus (Mouse)).